The sequence spans 437 residues: O-acetyl-L-homoserine sulfhydrylase (437 aa).

N6-(pyridoxal phosphate)lysine is present on lysine 216.

The protein belongs to the trans-sulfuration enzymes family. As to quaternary structure, homohexamer. The cofactor is pyridoxal 5'-phosphate.

It catalyses the reaction O-acetyl-L-homoserine + hydrogen sulfide = L-homocysteine + acetate. The enzyme catalyses O-acetyl-L-homoserine + methanethiol = L-methionine + acetate + H(+). It functions in the pathway amino-acid biosynthesis; L-methionine biosynthesis via de novo pathway; L-homocysteine from O-acetyl-L-homoserine: step 1/1. Its activity is regulated as follows. Inhibited by methionine and cystathionine. In terms of biological role, catalyzes the conversion of O-acetyl-L-homoserine (OAH) into homocysteine in the methionine biosynthesis pathway. Can also use dimethyldisulfide and methanethiol as reduced sulfur sources, leading to the direct formation of methionine. Has weak cystathionine gamma-synthase activity. This chain is O-acetyl-L-homoserine sulfhydrylase, found in Corynebacterium glutamicum (strain ATCC 13032 / DSM 20300 / JCM 1318 / BCRC 11384 / CCUG 27702 / LMG 3730 / NBRC 12168 / NCIMB 10025 / NRRL B-2784 / 534).